The sequence spans 122 residues: Large ribosomal subunit protein bL12 (122 aa).

This sequence belongs to the bacterial ribosomal protein bL12 family. As to quaternary structure, homodimer. Part of the ribosomal stalk of the 50S ribosomal subunit. Forms a multimeric L10(L12)X complex, where L10 forms an elongated spine to which 2 to 4 L12 dimers bind in a sequential fashion. Binds GTP-bound translation factors.

Its function is as follows. Forms part of the ribosomal stalk which helps the ribosome interact with GTP-bound translation factors. Is thus essential for accurate translation. The chain is Large ribosomal subunit protein bL12 from Streptococcus sanguinis (strain SK36).